Reading from the N-terminus, the 182-residue chain is Kappa-casein (182 aa).

The signal sequence occupies residues 1–20 (MKSFLLVVNALALTLPFLAV). 4 O-linked (GalNAc...) threonine glycosylation sites follow: Thr133, Thr143, Thr148, and Thr151. Thr157 carries the phosphothreonine; alternate modification. Thr157 carries an O-linked (GalNAc...) threonine; alternate glycan. Residues Thr167, Thr169, and Thr178 are each glycosylated (O-linked (GalNAc...) threonine).

This sequence belongs to the kappa-casein family. In terms of assembly, heteromultimers composed of alpha-s1 casein and kappa casein linked by disulfide bonds. The N-terminus is blocked. Mammary gland specific. Secreted in milk.

The protein resides in the secreted. In terms of biological role, kappa-casein stabilizes micelle formation, preventing casein precipitation in milk. This chain is Kappa-casein (CSN3), found in Homo sapiens (Human).